The chain runs to 373 residues: Dual-specificity RNA methyltransferase RlmN (373 aa).

Catalysis depends on Glu-94, which acts as the Proton acceptor. The Radical SAM core domain maps to 100 to 339 (EDDRATLCVS…VIVRKTRGDD (240 aa)). Cys-107 and Cys-344 are oxidised to a cystine. Residues Cys-114, Cys-118, and Cys-121 each contribute to the [4Fe-4S] cluster site. S-adenosyl-L-methionine contacts are provided by residues 168–169 (GE), Ser-200, 222–224 (SIH), and Asn-301. Cys-344 (S-methylcysteine intermediate) is an active-site residue.

It belongs to the radical SAM superfamily. RlmN family. [4Fe-4S] cluster is required as a cofactor.

The protein localises to the cytoplasm. It carries out the reaction adenosine(2503) in 23S rRNA + 2 reduced [2Fe-2S]-[ferredoxin] + 2 S-adenosyl-L-methionine = 2-methyladenosine(2503) in 23S rRNA + 5'-deoxyadenosine + L-methionine + 2 oxidized [2Fe-2S]-[ferredoxin] + S-adenosyl-L-homocysteine. The catalysed reaction is adenosine(37) in tRNA + 2 reduced [2Fe-2S]-[ferredoxin] + 2 S-adenosyl-L-methionine = 2-methyladenosine(37) in tRNA + 5'-deoxyadenosine + L-methionine + 2 oxidized [2Fe-2S]-[ferredoxin] + S-adenosyl-L-homocysteine. Its function is as follows. Specifically methylates position 2 of adenine 2503 in 23S rRNA and position 2 of adenine 37 in tRNAs. m2A2503 modification seems to play a crucial role in the proofreading step occurring at the peptidyl transferase center and thus would serve to optimize ribosomal fidelity. This is Dual-specificity RNA methyltransferase RlmN from Shewanella baltica (strain OS155 / ATCC BAA-1091).